The chain runs to 663 residues: UvrABC system protein B (663 aa).

A Helicase ATP-binding domain is found at 31–418 (DNIEGGEKAQ…TDTVVEQIIR (388 aa)). 44–51 (GATGTGKT) is a binding site for ATP. A Beta-hairpin motif is present at residues 97-120 (YYDYYQPEAYVPSSDTYIEKDSSV). Residues 435 to 601 (QMDDLLGEIN…TIKKEIRDLI (167 aa)) form the Helicase C-terminal domain. The region spanning 627-662 (QAEIKALQKQMQEAAELLDFELAAQIRDVILKLKAI) is the UVR domain.

Belongs to the UvrB family. As to quaternary structure, forms a heterotetramer with UvrA during the search for lesions. Interacts with UvrC in an incision complex.

Its subcellular location is the cytoplasm. Its function is as follows. The UvrABC repair system catalyzes the recognition and processing of DNA lesions. A damage recognition complex composed of 2 UvrA and 2 UvrB subunits scans DNA for abnormalities. Upon binding of the UvrA(2)B(2) complex to a putative damaged site, the DNA wraps around one UvrB monomer. DNA wrap is dependent on ATP binding by UvrB and probably causes local melting of the DNA helix, facilitating insertion of UvrB beta-hairpin between the DNA strands. Then UvrB probes one DNA strand for the presence of a lesion. If a lesion is found the UvrA subunits dissociate and the UvrB-DNA preincision complex is formed. This complex is subsequently bound by UvrC and the second UvrB is released. If no lesion is found, the DNA wraps around the other UvrB subunit that will check the other stand for damage. This Streptococcus agalactiae serotype Ia (strain ATCC 27591 / A909 / CDC SS700) protein is UvrABC system protein B.